The following is a 385-amino-acid chain: L-arabinitol 4-dehydrogenase (385 aa).

8 residues coordinate Zn(2+): Cys-54, His-79, Glu-80, Cys-109, Cys-112, Cys-115, Cys-123, and Glu-164. NAD(+) contacts are provided by residues 191 to 192, Asp-212, Arg-217, Ile-292, and 316 to 318; these read PI and QYR.

This sequence belongs to the zinc-containing alcohol dehydrogenase family. Homotetramer. It depends on Zn(2+) as a cofactor.

The catalysed reaction is L-arabinitol + NAD(+) = L-xylulose + NADH + H(+). The protein operates within carbohydrate degradation; L-arabinose degradation via L-arabinitol; D-xylulose 5-phosphate from L-arabinose (fungal route): step 2/5. Functionally, catalyzes the NAD-dependent oxidation of L-arabinitol to L-xylulose in the fungal L-arabinose catabolic pathway. L-arabinose catabolism is important for using plant material as a carbon source. NADP cannot act as a cosubstrate. This chain is L-arabinitol 4-dehydrogenase (lad1), found in Penicillium rubens (strain ATCC 28089 / DSM 1075 / NRRL 1951 / Wisconsin 54-1255) (Penicillium chrysogenum).